The chain runs to 247 residues: Carboxy-S-adenosyl-L-methionine synthase (247 aa).

S-adenosyl-L-methionine is bound by residues Tyr39, 64-66 (GCS), 89-90 (DN), 117-118 (DI), Asn132, and Arg199.

Belongs to the class I-like SAM-binding methyltransferase superfamily. Cx-SAM synthase family. As to quaternary structure, homodimer.

The enzyme catalyses prephenate + S-adenosyl-L-methionine = carboxy-S-adenosyl-L-methionine + 3-phenylpyruvate + H2O. Catalyzes the conversion of S-adenosyl-L-methionine (SAM) to carboxy-S-adenosyl-L-methionine (Cx-SAM). The polypeptide is Carboxy-S-adenosyl-L-methionine synthase (Salmonella paratyphi B (strain ATCC BAA-1250 / SPB7)).